The chain runs to 374 residues: Tomoregulin-2 (374 aa).

An N-terminal signal peptide occupies residues 1–39; it reads MVLWESPRQCSSWTLCEGFCWLLLLPVMLLIVARPVKLA. Topologically, residues 40-320 are extracellular; sequence AFPTSLSDCQ…VPGPVRFQYV (281 aa). N55 carries an N-linked (GlcNAc...) asparagine glycan. Kazal-like domains lie at 90-137 and 181-229; these read VCQF…SCAT and VCNI…RCQD. Cystine bridges form between C91/C121, C95/C114, C103/C135, C182/C213, C186/C206, C195/C227, C265/C278, C273/C289, and C291/C300. Residues 261–301 enclose the EGF-like domain; that stretch reads HHIPCPEHYNGFCMHGKCEHSINMQEPSCRCDAGYTGQHCE. Positions 303–320 are required for shedding; it reads KDYSVLYVVPGPVRFQYV. A helical membrane pass occupies residues 321–341; the sequence is LIAAVIGTIQIAVICVVVLCI. Residues 342–374 lie on the Cytoplasmic side of the membrane; sequence TRKCPRSNRIHRQKQNTGHYSSDNTTRASTRLI. Positions 353 to 374 are disordered; the sequence is RQKQNTGHYSSDNTTRASTRLI. Residues 356–374 are compositionally biased toward polar residues; sequence QNTGHYSSDNTTRASTRLI.

Belongs to the tomoregulin family. Post-translationally, O-glycosylated; contains chondroitin sulfate glycosaminoglycans. A soluble form (TMEFF2-ECD) is produced by proteolytic shedding. This shedding can be induced by phorbol ester or pro-inflammatory cytokines such as TNFalpha, and is mediated by a metalloproteinase ADAM.

Its subcellular location is the membrane. Functionally, may be a survival factor for hippocampal and mesencephalic neurons. The shedded form may up-regulate cell proliferation. In Bos taurus (Bovine), this protein is Tomoregulin-2 (TMEFF2).